Here is a 188-residue protein sequence, read N- to C-terminus: MNLVVYLIQLFLAALLHLSAVKAAHIPKEGGKSKNDVIPFMDVYKKSACKTRELLVDIIQEYPDEIEHTYIPSCVVLMRCAGCCNDEALECVPTETRNVTMEVLRVKQRVSQHNFQLSFTEHTKCECRPKAEVKAKKENHCEPCSERRKRLYVQDPLTCKCSCKFTQMQCKSRQLELNERTCRCEKPR.

Positions 1–23 (MNLVVYLIQLFLAALLHLSAVKA) are cleaved as a signal peptide. 3 disulfide bridges follow: C49/C91, C80/C125, and C84/C127. N98 is a glycosylation site (N-linked (GlcNAc...) asparagine).

It belongs to the PDGF/VEGF growth factor family. In terms of assembly, homodimer; disulfide-linked. Isoform VEGF165 binds kdr and kdrl. Predominantly expressed in regions associated with active vascularization. From 15-16 hours post-fertilization (hpf), expressed in the anterior forebrain, the mesoderm underlying and lateral to the anterior hindbrain, the mesoderm underlying and lateral to the posterior hindbrain, and in the ventral medial portions of the somites. By 30-36 hpf, expression in the somites is decreased, while strong expression is observed in the region of the developing glomeruli and in the anterior portion of the pronephric ducts, the pharyngeal arches, and the brain. By 72 hpf, expression remains only in the pronephros region.

The protein localises to the secreted. Growth factor active in angiogenesis, vasculogenesis and endothelial cell growth. Induces endothelial cell proliferation, promotes cell migration, inhibits apoptosis, and induces permeabilization of blood vessels. Required for intersegmental vessel development in the tail during embryogenesis. Acts both upstream of kdr and tie1 to stimulate endothelial cell differentiation, and upstream of gata1 to stimulate hematopoietic cell differentiation. The polypeptide is Vascular endothelial growth factor A-A (vegfaa) (Danio rerio (Zebrafish)).